The sequence spans 354 residues: MRVTDFSFELPESLIAHYPQPERSRCRLLSLEGPTGALTHGTFTDLLDKLNPGDLLVFNNTRVIPARLFGRKASGGKIEVLVERMLDDKRILAHIRASKAPKPGTELLLGDDESIHATMTARHGALFEVEFNDPRPVLDILNAIGHMPLPPYIDRPDEDADRELYQTVYSEKPGAVAAPTAGLHFDEPLLAALREKGIEMAFVTLHVGAGTFQPVRVDTIEDHIMHSEYAEVPQEVVDAVLAAKARGNRVIAVGTTSVRSLESAAQAAKNDLIEPLFGDTQIFIYPGYQYKVIDALITNFHLPESTLIMLVSAFAGYQHTMNAYKTAVEQKYRFFSYGDAMFITYNPQAISERP.

The protein belongs to the QueA family. Monomer.

The protein resides in the cytoplasm. It carries out the reaction 7-aminomethyl-7-carbaguanosine(34) in tRNA + S-adenosyl-L-methionine = epoxyqueuosine(34) in tRNA + adenine + L-methionine + 2 H(+). It participates in tRNA modification; tRNA-queuosine biosynthesis. Functionally, transfers and isomerizes the ribose moiety from AdoMet to the 7-aminomethyl group of 7-deazaguanine (preQ1-tRNA) to give epoxyqueuosine (oQ-tRNA). In Salmonella gallinarum (strain 287/91 / NCTC 13346), this protein is S-adenosylmethionine:tRNA ribosyltransferase-isomerase.